Reading from the N-terminus, the 173-residue chain is Crossover junction endodeoxyribonuclease RuvC (173 aa).

Active-site residues include Asp8, Glu67, and Asp139. 3 residues coordinate Mg(2+): Asp8, Glu67, and Asp139.

It belongs to the RuvC family. Homodimer which binds Holliday junction (HJ) DNA. The HJ becomes 2-fold symmetrical on binding to RuvC with unstacked arms; it has a different conformation from HJ DNA in complex with RuvA. In the full resolvosome a probable DNA-RuvA(4)-RuvB(12)-RuvC(2) complex forms which resolves the HJ. Mg(2+) is required as a cofactor.

The protein localises to the cytoplasm. It catalyses the reaction Endonucleolytic cleavage at a junction such as a reciprocal single-stranded crossover between two homologous DNA duplexes (Holliday junction).. In terms of biological role, the RuvA-RuvB-RuvC complex processes Holliday junction (HJ) DNA during genetic recombination and DNA repair. Endonuclease that resolves HJ intermediates. Cleaves cruciform DNA by making single-stranded nicks across the HJ at symmetrical positions within the homologous arms, yielding a 5'-phosphate and a 3'-hydroxyl group; requires a central core of homology in the junction. The consensus cleavage sequence is 5'-(A/T)TT(C/G)-3'. Cleavage occurs on the 3'-side of the TT dinucleotide at the point of strand exchange. HJ branch migration catalyzed by RuvA-RuvB allows RuvC to scan DNA until it finds its consensus sequence, where it cleaves and resolves the cruciform DNA. The sequence is that of Crossover junction endodeoxyribonuclease RuvC from Aliivibrio salmonicida (strain LFI1238) (Vibrio salmonicida (strain LFI1238)).